The following is a 191-amino-acid chain: Ribosome maturation factor RimM (191 aa).

The 74-residue stretch at 99-172 folds into the PRC barrel domain; that stretch reads TDEFYQIDLI…FLVVDPVAAG (74 aa).

It belongs to the RimM family. In terms of assembly, binds ribosomal protein uS19.

It localises to the cytoplasm. In terms of biological role, an accessory protein needed during the final step in the assembly of 30S ribosomal subunit, possibly for assembly of the head region. Essential for efficient processing of 16S rRNA. May be needed both before and after RbfA during the maturation of 16S rRNA. It has affinity for free ribosomal 30S subunits but not for 70S ribosomes. This chain is Ribosome maturation factor RimM, found in Bartonella bacilliformis (strain ATCC 35685 / KC583 / Herrer 020/F12,63).